The primary structure comprises 569 residues: Urease subunit alpha (569 aa).

A Urease domain is found at 131-569; sequence GGFDAHIHFI…LPLAQRYFMY (439 aa). 3 residues coordinate Ni(2+): His136, His138, and Lys219. Lys219 is modified (N6-carboxylysine). Position 221 (His221) interacts with substrate. Residues His248 and His274 each contribute to the Ni(2+) site. The active-site Proton donor is the His322. Residue Asp362 participates in Ni(2+) binding.

This sequence belongs to the metallo-dependent hydrolases superfamily. Urease alpha subunit family. Heterotrimer of UreA (gamma), UreB (beta) and UreC (alpha) subunits. Three heterotrimers associate to form the active enzyme. Ni cation serves as cofactor. Carboxylation allows a single lysine to coordinate two nickel ions.

The protein resides in the cytoplasm. The enzyme catalyses urea + 2 H2O + H(+) = hydrogencarbonate + 2 NH4(+). It participates in nitrogen metabolism; urea degradation; CO(2) and NH(3) from urea (urease route): step 1/1. This is Urease subunit alpha from Jannaschia sp. (strain CCS1).